The sequence spans 363 residues: Large ribosomal subunit protein uL4 (363 aa).

This sequence belongs to the universal ribosomal protein uL4 family. As to quaternary structure, component of the large ribosomal subunit. Mature ribosomes consist of a small (40S) and a large (60S) subunit. The 40S subunit contains about 32 different proteins and 1 molecule of RNA (18S). The 60S subunit contains 45 different proteins and 3 molecules of RNA (25S, 5.8S and 5S).

It is found in the cytoplasm. Component of the ribosome, a large ribonucleoprotein complex responsible for the synthesis of proteins in the cell. The small ribosomal subunit (SSU) binds messenger RNAs (mRNAs) and translates the encoded message by selecting cognate aminoacyl-transfer RNA (tRNA) molecules. The large subunit (LSU) contains the ribosomal catalytic site termed the peptidyl transferase center (PTC), which catalyzes the formation of peptide bonds, thereby polymerizing the amino acids delivered by tRNAs into a polypeptide chain. The nascent polypeptides leave the ribosome through a tunnel in the LSU and interact with protein factors that function in enzymatic processing, targeting, and the membrane insertion of nascent chains at the exit of the ribosomal tunnel. This is Large ribosomal subunit protein uL4 from Candida albicans (strain SC5314 / ATCC MYA-2876) (Yeast).